Reading from the N-terminus, the 356-residue chain is Nicotinate-nucleotide--dimethylbenzimidazole phosphoribosyltransferase (356 aa).

Glu317 (proton acceptor) is an active-site residue.

The protein belongs to the CobT family. As to quaternary structure, homodimer.

It catalyses the reaction 5,6-dimethylbenzimidazole + nicotinate beta-D-ribonucleotide = alpha-ribazole 5'-phosphate + nicotinate + H(+). Its pathway is nucleoside biosynthesis; alpha-ribazole biosynthesis; alpha-ribazole from 5,6-dimethylbenzimidazole: step 1/2. In terms of biological role, catalyzes the synthesis of alpha-ribazole-5'-phosphate from nicotinate mononucleotide (NAMN) and 5,6-dimethylbenzimidazole (DMB). This Salmonella paratyphi A (strain ATCC 9150 / SARB42) protein is Nicotinate-nucleotide--dimethylbenzimidazole phosphoribosyltransferase.